The sequence spans 469 residues: RuvB-like helicase 2 (469 aa).

76 to 83 (GPPSTGKT) contacts ATP.

The protein belongs to the RuvB family. In terms of assembly, may form heterododecamers with RVB1. Component of the SWR1 chromatin remodeling complex, the INO80 chromatin remodeling complex, and of the R2TP complex.

It is found in the nucleus. The catalysed reaction is ATP + H2O = ADP + phosphate + H(+). Functionally, DNA helicase which participates in several chromatin remodeling complexes, including the SWR1 and the INO80 complexes. The SWR1 complex mediates the ATP-dependent exchange of histone H2A for the H2A variant HZT1 leading to transcriptional regulation of selected genes by chromatin remodeling. The INO80 complex remodels chromatin by shifting nucleosomes and is involved in DNA repair. Also involved in pre-rRNA processing. The sequence is that of RuvB-like helicase 2 (rvb2) from Aspergillus fumigatus (strain ATCC MYA-4609 / CBS 101355 / FGSC A1100 / Af293) (Neosartorya fumigata).